Reading from the N-terminus, the 277-residue chain is Uridine-cytidine kinase 1 (277 aa).

A disordered region spans residues 1 to 30 (MASAGGEDCESPAPEADRPHQRPFLIGVSG). 30 to 38 (GGTASGKST) serves as a coordination point for ATP. Residue Asp-65 is part of the active site. Substrate contacts are provided by Asp-87, Tyr-115, His-120, Arg-169, Arg-178, and Gln-186. Residue Asp-215 participates in ATP binding. The segment at 247 to 277 (SYKRTFSEPGDHPGMLTSGKRSHLESSSRPH) is disordered. Position 251 is a phosphothreonine (Thr-251). The residue at position 253 (Ser-253) is a Phosphoserine. Positions 268–277 (SHLESSSRPH) are enriched in basic and acidic residues.

The protein belongs to the uridine kinase family. As to expression, ubiquitous.

It carries out the reaction uridine + ATP = UMP + ADP + H(+). It catalyses the reaction cytidine + ATP = CMP + ADP + H(+). Its pathway is pyrimidine metabolism; CTP biosynthesis via salvage pathway; CTP from cytidine: step 1/3. It participates in pyrimidine metabolism; UMP biosynthesis via salvage pathway; UMP from uridine: step 1/1. Its function is as follows. Phosphorylates uridine and cytidine to uridine monophosphate and cytidine monophosphate. Does not phosphorylate deoxyribonucleosides or purine ribonucleosides. Can use ATP or GTP as a phosphate donor. Can also phosphorylate cytidine and uridine nucleoside analogs such as 6-azauridine, 5-fluorouridine, 4-thiouridine, 5-bromouridine, N(4)-acetylcytidine, N(4)-benzoylcytidine, 5-fluorocytidine, 2-thiocytidine, 5-methylcytidine, and N(4)-anisoylcytidine. This Homo sapiens (Human) protein is Uridine-cytidine kinase 1 (UCK1).